We begin with the raw amino-acid sequence, 556 residues long: Bifunctional methyltransferase (556 aa).

The tract at residues 1–310 is RF MTase; it reads MQYSIQKFLN…NRVIEISLIQ (310 aa). S-adenosyl-L-methionine is bound by residues 148 to 152, Asp171, Trp200, and Asn215; that span reads GTGSG. 215–218 serves as a coordination point for substrate; the sequence is NPPY. The interval 313–556 is tRNA MTase; the sequence is RSYARRIGKS…IITKIPPKSY (244 aa). An insert region spans residues 348 to 399; sequence KNYNSCKIKSNYTKFNLEKSKESVSRGAERIKIREHLRTYKEDVANFSSSTS. Residues Glu403, Glu428, Asn455, and Asp477 each coordinate S-adenosyl-L-methionine. Asp477 is a catalytic residue. Lys481 and Asp513 together coordinate substrate.

This sequence in the C-terminal section; belongs to the class I-like SAM-binding methyltransferase superfamily. TrmB family. In the N-terminal section; belongs to the protein N5-glutamine methyltransferase family. PrmC subfamily.

The catalysed reaction is L-glutaminyl-[peptide chain release factor] + S-adenosyl-L-methionine = N(5)-methyl-L-glutaminyl-[peptide chain release factor] + S-adenosyl-L-homocysteine + H(+). It catalyses the reaction guanosine(46) in tRNA + S-adenosyl-L-methionine = N(7)-methylguanosine(46) in tRNA + S-adenosyl-L-homocysteine. Methylates the class 1 translation termination release factors RF1/PrfA and RF2/PrfB on the glutamine residue of the universally conserved GGQ motif. Its function is as follows. Catalyzes the formation of N(7)-methylguanine at position 46 (m7G46) in tRNA. The chain is Bifunctional methyltransferase (prmC/trmB) from Rickettsia bellii (strain RML369-C).